Here is a 311-residue protein sequence, read N- to C-terminus: Ribosomal protein L11 methyltransferase (311 aa).

S-adenosyl-L-methionine contacts are provided by T162, G183, D205, and N248.

It belongs to the methyltransferase superfamily. PrmA family.

The protein localises to the cytoplasm. The catalysed reaction is L-lysyl-[protein] + 3 S-adenosyl-L-methionine = N(6),N(6),N(6)-trimethyl-L-lysyl-[protein] + 3 S-adenosyl-L-homocysteine + 3 H(+). In terms of biological role, methylates ribosomal protein L11. The polypeptide is Ribosomal protein L11 methyltransferase (Bacillus licheniformis (strain ATCC 14580 / DSM 13 / JCM 2505 / CCUG 7422 / NBRC 12200 / NCIMB 9375 / NCTC 10341 / NRRL NRS-1264 / Gibson 46)).